Reading from the N-terminus, the 373-residue chain is ATP synthase gamma chain 1, chloroplastic (373 aa).

The transit peptide at 1-50 directs the protein to the chloroplast; that stretch reads MACSNLTTMWVSSKPSLSADSSSLSFRSVLKCPTNTSSPPSRASSVSPLQ. Cys139 is a catalytic residue. A disulfide bond links Cys249 and Cys255. At Ser347 the chain carries Phosphoserine.

This sequence belongs to the ATPase gamma chain family. As to quaternary structure, F-type ATPases have 2 components, CF(1) - the catalytic core - and CF(0) - the membrane proton channel. CF(1) has five subunits: alpha(3), beta(3), gamma(1), delta(1), epsilon(1). CF(0) has four main subunits: a, b, b' and c. Interacts with PAB.

The protein resides in the plastid. Its subcellular location is the chloroplast thylakoid membrane. Functionally, produces ATP from ADP in the presence of a proton gradient across the membrane. The gamma chain is believed to be important in regulating ATPase activity and the flow of protons through the CF(0) complex. This is ATP synthase gamma chain 1, chloroplastic (ATPC1) from Arabidopsis thaliana (Mouse-ear cress).